The sequence spans 205 residues: UPF0301 protein AZC_0488 (205 aa).

Belongs to the UPF0301 (AlgH) family.

The protein is UPF0301 protein AZC_0488 of Azorhizobium caulinodans (strain ATCC 43989 / DSM 5975 / JCM 20966 / LMG 6465 / NBRC 14845 / NCIMB 13405 / ORS 571).